A 219-amino-acid polypeptide reads, in one-letter code: Mucosal pentraxin (219 aa).

The N-terminal stretch at 1–19 (MEKLIVGTLLLTVLSGGIS) is a signal peptide. The Pentraxin (PTX) domain maps to 24-219 (DGKAFIFPQE…YVVTKPKLWT (196 aa)). Residues Cys-55 and Cys-114 are joined by a disulfide bond. Ca(2+) is bound by residues Asp-77, Asn-78, Glu-155, Gln-156, Asp-157, and Gln-167.

The protein belongs to the pentraxin family. In terms of assembly, homopentamer. Pentraxin (or pentaxin) have a discoid arrangement of 5 non-covalently bound subunits. It depends on Ca(2+) as a cofactor. In terms of tissue distribution, expression is restricted to small intestine, stomach and colon. Within colon, expressed in epithelial cells located within the lower to mid region of transverse and distal crypts, but not in proximal colon.

The protein resides in the secreted. This chain is Mucosal pentraxin (Mptx1), found in Rattus norvegicus (Rat).